The sequence spans 183 residues: Protein FAM180B (183 aa).

A signal peptide spans 1 to 23 (MAATLQFLVCLVVAICLLSGVTT).

It belongs to the FAM180 family.

Its subcellular location is the secreted. In Homo sapiens (Human), this protein is Protein FAM180B (FAM180B).